The primary structure comprises 181 residues: Adenylate kinase (181 aa).

ATP is bound at residue 10–15 (GAGKGT). The tract at residues 30 to 59 (STGDLFRANIGEGTPLGIEAKQYIDAGKLV) is NMP. Residues T31, R36, 57-59 (KLV), 85-88 (GFPR), and Q92 contribute to the AMP site. Residues 126–132 (SRGRADD) form an LID region. R127 is a binding site for ATP. AMP contacts are provided by R129 and R140. G166 contributes to the ATP binding site.

The protein belongs to the adenylate kinase family. In terms of assembly, monomer.

The protein localises to the cytoplasm. It carries out the reaction AMP + ATP = 2 ADP. The protein operates within purine metabolism; AMP biosynthesis via salvage pathway; AMP from ADP: step 1/1. Functionally, catalyzes the reversible transfer of the terminal phosphate group between ATP and AMP. Plays an important role in cellular energy homeostasis and in adenine nucleotide metabolism. This is Adenylate kinase from Corynebacterium glutamicum (strain R).